The following is a 137-amino-acid chain: Small heat shock protein IbpA (137 aa).

The 110-residue stretch at 28–137 (NQSNGGYPPY…SLKPRRIEIK (110 aa)) folds into the sHSP domain.

The protein belongs to the small heat shock protein (HSP20) family. In terms of assembly, monomer. Forms homomultimers of about 100-150 subunits at optimal growth temperatures. Conformation changes to monomers at high temperatures or high ionic concentrations.

It is found in the cytoplasm. Functionally, associates with aggregated proteins, together with IbpB, to stabilize and protect them from irreversible denaturation and extensive proteolysis during heat shock and oxidative stress. Aggregated proteins bound to the IbpAB complex are more efficiently refolded and reactivated by the ATP-dependent chaperone systems ClpB and DnaK/DnaJ/GrpE. Its activity is ATP-independent. The polypeptide is Small heat shock protein IbpA (Yersinia pseudotuberculosis serotype O:1b (strain IP 31758)).